The chain runs to 291 residues: Phytanoyl-CoA dioxygenase domain-containing protein 1 (291 aa).

At Thr-55 the chain carries Phosphothreonine. Residues Lys-102, Met-141, 156-158 (HQD), and Trp-174 each bind 2-oxoglutarate. Residues His-156 and Asp-158 each coordinate Fe cation. His-246 lines the Fe cation pocket. Ser-248 and Arg-257 together coordinate 2-oxoglutarate.

This sequence belongs to the PhyH family. PHYHD1 subfamily. It depends on Fe cation as a cofactor.

Functionally, 2-oxoglutarate(2OG)-dependent dioxygenase that catalyzes the conversion of 2-oxoglutarate to succinate and CO(2) in an iron-dependent manner. However, does not couple 2OG turnover to the hydroxylation of acyl-coenzyme A derivatives, implying that it is not directly involved in phytanoyl coenzyme-A metabolism. Does not show detectable activity towards fatty acid CoA thioesters. This chain is Phytanoyl-CoA dioxygenase domain-containing protein 1, found in Mus musculus (Mouse).